We begin with the raw amino-acid sequence, 146 residues long: Large ribosomal subunit protein uL15 (146 aa).

The interval 1-54 is disordered; the sequence is MKLHELKPAAGSRKAPKRVGRGTGSGLGRNAGKGEKGQNARSGGGVRPGFEGGQ. 2 stretches are compositionally biased toward gly residues: residues 21–31 and 42–52; these read RGTGSGLGRNA and SGGGVRPGFEG.

Belongs to the universal ribosomal protein uL15 family. As to quaternary structure, part of the 50S ribosomal subunit.

Its function is as follows. Binds to the 23S rRNA. This is Large ribosomal subunit protein uL15 from Clostridium acetobutylicum (strain ATCC 824 / DSM 792 / JCM 1419 / IAM 19013 / LMG 5710 / NBRC 13948 / NRRL B-527 / VKM B-1787 / 2291 / W).